A 63-amino-acid chain; its full sequence is Large ribosomal subunit protein bL32 (63 aa).

The interval 1-23 (MATPKAKVSKSRRDKRRAQFTAR) is disordered. A compositionally biased stretch (basic residues) spans 7 to 18 (KVSKSRRDKRRA).

Belongs to the bacterial ribosomal protein bL32 family.

This Prosthecochloris aestuarii (strain DSM 271 / SK 413) protein is Large ribosomal subunit protein bL32.